The sequence spans 114 residues: Phosphoribosyl-AMP cyclohydrolase (114 aa).

Asp76 is a Mg(2+) binding site. Cys77 contacts Zn(2+). Asp78 and Asp80 together coordinate Mg(2+). 2 residues coordinate Zn(2+): Cys93 and Cys100.

Belongs to the PRA-CH family. As to quaternary structure, homodimer. Requires Mg(2+) as cofactor. Zn(2+) is required as a cofactor.

The protein localises to the cytoplasm. It catalyses the reaction 1-(5-phospho-beta-D-ribosyl)-5'-AMP + H2O = 1-(5-phospho-beta-D-ribosyl)-5-[(5-phospho-beta-D-ribosylamino)methylideneamino]imidazole-4-carboxamide. The protein operates within amino-acid biosynthesis; L-histidine biosynthesis; L-histidine from 5-phospho-alpha-D-ribose 1-diphosphate: step 3/9. Its function is as follows. Catalyzes the hydrolysis of the adenine ring of phosphoribosyl-AMP. This chain is Phosphoribosyl-AMP cyclohydrolase, found in Streptococcus gordonii (strain Challis / ATCC 35105 / BCRC 15272 / CH1 / DL1 / V288).